A 183-amino-acid chain; its full sequence is Oligoribonuclease (183 aa).

One can recognise an Exonuclease domain in the interval Leu8–Leu171. Tyr129 is a catalytic residue.

It belongs to the oligoribonuclease family.

The protein resides in the cytoplasm. Its function is as follows. 3'-to-5' exoribonuclease specific for small oligoribonucleotides. The polypeptide is Oligoribonuclease (Coxiella burnetii (strain RSA 493 / Nine Mile phase I)).